A 356-amino-acid chain; its full sequence is MGANLTSPLPHHHRTQTTSVCNHLFSPGDGGPTFAPQRDSNTSSRSSSNAKESVLMQGWNWSKRNIQPVMSRRSLPKSGSSSEATSSKSSDSLVSFTRNVSTSTSSQYGKISISLDRNQNYKSVPRPSDTTTIIPNYYSLREEFRRGLQINTRQDLVNNNLASNDLSVIGSPKHVPRPRSVLRDDNANCDISPIAEQENVPSEASTSELLRGLGIFISNNCDVSDFDPAHLVTWLRSVDRSLLLQGWQDIAFINPANLVFIFLLVRDVLPDERHLIHTLEELHAWILSCLYVSYSYMGNEISYPLKPFLIGNDRNTFWNRCVAMVTSHSRQMLLLNSSSTFFSEVFTDLKHCSSSE.

2 disordered regions span residues M1 to S53 and I66 to N99. Composition is skewed to low complexity over residues S40–N49 and S71–S92.

This sequence belongs to the cyclin-dependent kinase 5 activator family. Heterodimer composed of a catalytic subunit cdk-5 and a regulatory subunit cdka-1. Interaction with cdka-1 is required for cdk-5 activation. As to expression, expressed in all classes of neurons in the ventral cord.

The protein localises to the cytoplasm. Its subcellular location is the cell projection. The protein resides in the dendrite. It is found in the axon. Its function is as follows. Activator of the kinase cdk-5. In several motor neurons, promotes the polarized trafficking of synaptic vesicles and dense-core vesicles. In the ventral nerve cord, regulates the synaptic localization of the glutamate receptor, glr-1. In DA motor neurons, regulates axonal transport of synaptic vesicle precursors by inhibiting dynein-mediated retrograde transport. Regulates the polarized distribution of dense-core vesicles in DB motor neurons. May regulate these processes in association with cdk-5. May also play a role in GABAergic synaptic vesicle localization in the ventral nerve cord. The sequence is that of Cyclin-dependent kinase 5 activator 1 from Caenorhabditis elegans.